The primary structure comprises 326 residues: tRNA-modifying protein YgfZ (326 aa).

Folate-binding residues include W27 and W189.

It belongs to the tRNA-modifying YgfZ family.

Its subcellular location is the cytoplasm. In terms of biological role, folate-binding protein involved in regulating the level of ATP-DnaA and in the modification of some tRNAs. It is probably a key factor in regulatory networks that act via tRNA modification, such as initiation of chromosomal replication. In Escherichia coli O6:K15:H31 (strain 536 / UPEC), this protein is tRNA-modifying protein YgfZ.